The primary structure comprises 184 residues: Peptide deformylase (184 aa).

Positions 96 and 138 each coordinate Fe cation. The active site involves E139. Residue H142 participates in Fe cation binding.

Belongs to the polypeptide deformylase family. It depends on Fe(2+) as a cofactor.

It catalyses the reaction N-terminal N-formyl-L-methionyl-[peptide] + H2O = N-terminal L-methionyl-[peptide] + formate. In terms of biological role, removes the formyl group from the N-terminal Met of newly synthesized proteins. Requires at least a dipeptide for an efficient rate of reaction. N-terminal L-methionine is a prerequisite for activity but the enzyme has broad specificity at other positions. The chain is Peptide deformylase from Cytophaga hutchinsonii (strain ATCC 33406 / DSM 1761 / CIP 103989 / NBRC 15051 / NCIMB 9469 / D465).